Reading from the N-terminus, the 352-residue chain is Protein RecA (352 aa).

66-73 is an ATP binding site; sequence GPESSGKT.

The protein belongs to the RecA family.

It localises to the cytoplasm. Functionally, can catalyze the hydrolysis of ATP in the presence of single-stranded DNA, the ATP-dependent uptake of single-stranded DNA by duplex DNA, and the ATP-dependent hybridization of homologous single-stranded DNAs. It interacts with LexA causing its activation and leading to its autocatalytic cleavage. This Psychrobacter arcticus (strain DSM 17307 / VKM B-2377 / 273-4) protein is Protein RecA.